An 868-amino-acid chain; its full sequence is Envelope glycoprotein gp160 (868 aa).

A signal peptide spans 1–33 (MAMRAKGIRKNCQHLWRWGTMLLGMLMICSAAA). Topologically, residues 34 to 696 (NLWVTVYYGV…ITKWLWYIKI (663 aa)) are extracellular. An intrachain disulfide couples Cys-55 to Cys-75. Asn-89, Asn-131, Asn-138, Asn-139, Asn-142, Asn-162, Asn-166, Asn-195, Asn-198, Asn-208, Asn-245, Asn-252, Asn-273, Asn-287, Asn-300, Asn-306, Asn-312, Asn-342, Asn-349, Asn-365, and Asn-371 each carry an N-linked (GlcNAc...) asparagine; by host glycan. 5 disulfides stabilise this stretch: Cys-120–Cys-216, Cys-127–Cys-207, Cys-132–Cys-163, Cys-229–Cys-258, and Cys-239–Cys-250. The tract at residues 132–162 (CTDLNTNNTTNTTELSIIVVWEQRGKGEMRN) is V1. The interval 163–207 (CSFNITTSIRDKVQREYALFYKLDVEPIDDNKNTTNNTKYRLINC) is V2. A V3 region spans residues 307–340 (CTRPNNHTRKRVTLGPGRVWYTTGEILGNIRQAH). Cys-307 and Cys-341 are oxidised to a cystine. Residues 373-383 (SSGGDPEIVMH) are CD4-binding loop. 2 cysteine pairs are disulfide-bonded: Cys-387/Cys-456 and Cys-394/Cys-429. The tract at residues 394–429 (CNSTQLFNSAWNVTSNGTWSVTRKQKDTGDIITLPC) is V4. N-linked (GlcNAc...) asparagine; by host glycans are attached at residues Asn-395, Asn-405, Asn-409, Asn-459, and Asn-473. 2 V5 regions span residues 472 to 482 (ENQTTEIFRPG) and 474 to 482 (QTTEIFRPG). The segment at 523-544 (AVGMLGAMFLGFLGAAGSTMGA) is fusion peptide. An immunosuppression region spans residues 586–604 (KQLQARILAVERYLKDQQL). A disulfide bridge links Cys-610 with Cys-616. Asn-623, Asn-628, Asn-637, and Asn-649 each carry an N-linked (GlcNAc...) asparagine; by host glycan. Residues 645–679 (REIDNYTHLIYTLIEESQNQQEKNQQELLQLDKWA) adopt a coiled-coil conformation. An MPER; binding to GalCer region spans residues 674–695 (QLDKWASLWTWSDITKWLWYIK). A helical transmembrane segment spans residues 697–717 (FIMIVGGLIGLRIVFAVLSIV). The Cytoplasmic portion of the chain corresponds to 718 to 868 (NRVRQGYSPL…IRQGFERALL (151 aa)). Residues 724–727 (YSPL) carry the YXXL motif; contains endocytosis signal motif. The tract at residues 731-755 (TLLPNPRGPDRPEGTEEGGGERGRD) is disordered. Positions 738–755 (GPDRPEGTEEGGGERGRD) are enriched in basic and acidic residues. Cys-776 is lipidated: S-palmitoyl cysteine; by host. A Di-leucine internalization motif motif is present at residues 867–868 (LL).

It belongs to the HIV-1 env protein family. The mature envelope protein (Env) consists of a homotrimer of non-covalently associated gp120-gp41 heterodimers. The resulting complex protrudes from the virus surface as a spike. There seems to be as few as 10 spikes on the average virion. Interacts with host CD4, CCR5 and CXCR4. Gp120 also interacts with the C-type lectins CD209/DC-SIGN and CLEC4M/DC-SIGNR (collectively referred to as DC-SIGN(R)). Gp120 and gp41 interact with GalCer. Gp120 interacts with host ITGA4/ITGB7 complex; on CD4+ T-cells, this interaction results in rapid activation of integrin ITGAL/LFA-1, which facilitates efficient cell-to-cell spreading of HIV-1. Gp120 interacts with cell-associated heparan sulfate; this interaction increases virus infectivity on permissive cells and may be involved in infection of CD4- cells. As to quaternary structure, the mature envelope protein (Env) consists of a homotrimer of non-covalently associated gp120-gp41 heterodimers. The resulting complex protrudes from the virus surface as a spike. There seems to be as few as 10 spikes on the average virion. Post-translationally, highly glycosylated by host. The high number of glycan on the protein is reffered to as 'glycan shield' because it contributes to hide protein sequence from adaptive immune system. Palmitoylation of the transmembrane protein and of Env polyprotein (prior to its proteolytic cleavage) is essential for their association with host cell membrane lipid rafts. Palmitoylation is therefore required for envelope trafficking to classical lipid rafts, but not for viral replication. In terms of processing, specific enzymatic cleavages in vivo yield mature proteins. Envelope glycoproteins are synthesized as an inactive precursor that is heavily N-glycosylated and processed likely by host cell furin in the Golgi to yield the mature SU and TM proteins. The cleavage site between SU and TM requires the minimal sequence [KR]-X-[KR]-R. About 2 of the 9 disulfide bonds of gp41 are reduced by P4HB/PDI, following binding to CD4 receptor.

The protein localises to the virion membrane. It localises to the host cell membrane. Its subcellular location is the host endosome membrane. Its function is as follows. Oligomerizes in the host endoplasmic reticulum into predominantly trimers. In a second time, gp160 transits in the host Golgi, where glycosylation is completed. The precursor is then proteolytically cleaved in the trans-Golgi and thereby activated by cellular furin or furin-like proteases to produce gp120 and gp41. Attaches the virus to the host lymphoid cell by binding to the primary receptor CD4. This interaction induces a structural rearrangement creating a high affinity binding site for a chemokine coreceptor like CXCR4 and/or CCR5. Acts as a ligand for CD209/DC-SIGN and CLEC4M/DC-SIGNR, which are respectively found on dendritic cells (DCs), and on endothelial cells of liver sinusoids and lymph node sinuses. These interactions allow capture of viral particles at mucosal surfaces by these cells and subsequent transmission to permissive cells. HIV subverts the migration properties of dendritic cells to gain access to CD4+ T-cells in lymph nodes. Virus transmission to permissive T-cells occurs either in trans (without DCs infection, through viral capture and transmission), or in cis (following DCs productive infection, through the usual CD4-gp120 interaction), thereby inducing a robust infection. In trans infection, bound virions remain infectious over days and it is proposed that they are not degraded, but protected in non-lysosomal acidic organelles within the DCs close to the cell membrane thus contributing to the viral infectious potential during DCs' migration from the periphery to the lymphoid tissues. On arrival at lymphoid tissues, intact virions recycle back to DCs' cell surface allowing virus transmission to CD4+ T-cells. In terms of biological role, acts as a class I viral fusion protein. Under the current model, the protein has at least 3 conformational states: pre-fusion native state, pre-hairpin intermediate state, and post-fusion hairpin state. During fusion of viral and target intracellular membranes, the coiled coil regions (heptad repeats) assume a trimer-of-hairpins structure, positioning the fusion peptide in close proximity to the C-terminal region of the ectodomain. The formation of this structure appears to drive apposition and subsequent fusion of viral and target cell membranes. Complete fusion occurs in host cell endosomes and is dynamin-dependent, however some lipid transfer might occur at the plasma membrane. The virus undergoes clathrin-dependent internalization long before endosomal fusion, thus minimizing the surface exposure of conserved viral epitopes during fusion and reducing the efficacy of inhibitors targeting these epitopes. Membranes fusion leads to delivery of the nucleocapsid into the cytoplasm. This chain is Envelope glycoprotein gp160, found in Human immunodeficiency virus type 1 group M subtype B (isolate CDC-451) (HIV-1).